Consider the following 342-residue polypeptide: Putative anthocyanidin reductase (342 aa).

Residues R44, K51, 71–72, 91–93, Y172, K176, 199–202, and S214 contribute to the NADP(+) site; these read EL, VAT, and PVLV. K176 acts as the Proton donor in catalysis.

This sequence belongs to the NAD(P)-dependent epimerase/dehydratase family. Dihydroflavonol-4-reductase subfamily. Highly expressed in leaves and weakly in stems. Not expressed in roots.

The protein operates within secondary metabolite biosynthesis; flavonoid biosynthesis. The protein is Putative anthocyanidin reductase of Ginkgo biloba (Ginkgo).